The following is a 634-amino-acid chain: Phospholipase B (634 aa).

Positions 1-19 (MSIITTAFALSLLATTAFA) are cleaved as a signal peptide. The region spanning 46–569 (DCPSNVTWIR…DTWCWAGDDN (524 aa)) is the PLA2c domain. 17 N-linked (GlcNAc...) asparagine glycosylation sites follow: Asn50, Asn56, Asn122, Asn231, Asn246, Asn269, Asn311, Asn340, Asn384, Asn430, Asn478, Asn498, Asn525, Asn550, Asn569, Asn591, and Asn603.

It belongs to the lysophospholipase family. N-glycosylated.

Its subcellular location is the secreted. The catalysed reaction is a 1-acyl-sn-glycero-3-phosphocholine + H2O = sn-glycerol 3-phosphocholine + a fatty acid + H(+). Its function is as follows. Exhibits phospholipase B (PLB), lysophospholipase (LPL) and lysophospholipase/transacylase (LPTA) activities. The chain is Phospholipase B (PLB1) from Cryptococcus neoformans var. neoformans serotype D (strain JEC21 / ATCC MYA-565) (Filobasidiella neoformans).